Consider the following 66-residue polypeptide: DNA-directed RNA polymerase subunit Rpo10 (66 aa).

Zn(2+)-binding residues include Cys-7, Cys-10, Cys-44, and Cys-45.

This sequence belongs to the archaeal Rpo10/eukaryotic RPB10 RNA polymerase subunit family. In terms of assembly, part of the RNA polymerase complex. Requires Zn(2+) as cofactor.

The protein resides in the cytoplasm. It carries out the reaction RNA(n) + a ribonucleoside 5'-triphosphate = RNA(n+1) + diphosphate. Functionally, DNA-dependent RNA polymerase (RNAP) catalyzes the transcription of DNA into RNA using the four ribonucleoside triphosphates as substrates. The sequence is that of DNA-directed RNA polymerase subunit Rpo10 from Pyrobaculum aerophilum (strain ATCC 51768 / DSM 7523 / JCM 9630 / CIP 104966 / NBRC 100827 / IM2).